Consider the following 304-residue polypeptide: tRNA U34 carboxymethyltransferase (304 aa).

Carboxy-S-adenosyl-L-methionine is bound by residues lysine 73, tryptophan 87, lysine 92, glycine 111, 133-135, 160-161, tyrosine 180, and arginine 295; these read DPS and VE.

Belongs to the class I-like SAM-binding methyltransferase superfamily. CmoB family. As to quaternary structure, homotetramer.

The catalysed reaction is carboxy-S-adenosyl-L-methionine + 5-hydroxyuridine(34) in tRNA = 5-carboxymethoxyuridine(34) in tRNA + S-adenosyl-L-homocysteine + H(+). Functionally, catalyzes carboxymethyl transfer from carboxy-S-adenosyl-L-methionine (Cx-SAM) to 5-hydroxyuridine (ho5U) to form 5-carboxymethoxyuridine (cmo5U) at position 34 in tRNAs. The chain is tRNA U34 carboxymethyltransferase from Aliarcobacter butzleri (strain RM4018) (Arcobacter butzleri).